The following is a 524-amino-acid chain: Mitochondrial-processing peptidase subunit alpha (524 aa).

A mitochondrion-targeting transit peptide spans 1 to 32 (MATAVWAAARLLRGSAALCARPKFGSPAHRRF). Residue Lys63 is modified to N6-succinyllysine.

This sequence belongs to the peptidase M16 family. In terms of assembly, heterodimer of PMPCA (alpha) and PMPCB (beta) subunits, forming the mitochondrial processing protease (MPP) in which PMPCA is involved in substrate recognition and binding and PMPCB is the catalytic subunit.

Its subcellular location is the mitochondrion matrix. It localises to the mitochondrion inner membrane. In terms of biological role, substrate recognition and binding subunit of the essential mitochondrial processing protease (MPP), which cleaves the mitochondrial sequence off newly imported precursors proteins. The chain is Mitochondrial-processing peptidase subunit alpha (Pmpca) from Rattus norvegicus (Rat).